The primary structure comprises 422 residues: Serine--tRNA ligase (422 aa).

229–231 (TAE) is an L-serine binding site. ATP is bound by residues 260–262 (RRE) and V276. Residue E283 participates in L-serine binding. Residue 349-352 (EVTS) participates in ATP binding. T384 lines the L-serine pocket.

Belongs to the class-II aminoacyl-tRNA synthetase family. Type-1 seryl-tRNA synthetase subfamily. In terms of assembly, homodimer. The tRNA molecule binds across the dimer.

The protein resides in the cytoplasm. It carries out the reaction tRNA(Ser) + L-serine + ATP = L-seryl-tRNA(Ser) + AMP + diphosphate + H(+). It catalyses the reaction tRNA(Sec) + L-serine + ATP = L-seryl-tRNA(Sec) + AMP + diphosphate + H(+). It participates in aminoacyl-tRNA biosynthesis; selenocysteinyl-tRNA(Sec) biosynthesis; L-seryl-tRNA(Sec) from L-serine and tRNA(Sec): step 1/1. In terms of biological role, catalyzes the attachment of serine to tRNA(Ser). Is also able to aminoacylate tRNA(Sec) with serine, to form the misacylated tRNA L-seryl-tRNA(Sec), which will be further converted into selenocysteinyl-tRNA(Sec). The chain is Serine--tRNA ligase from Treponema denticola (strain ATCC 35405 / DSM 14222 / CIP 103919 / JCM 8153 / KCTC 15104).